Consider the following 205-residue polypeptide: Nascent polypeptide-associated complex subunit alpha-like protein (205 aa).

Disordered regions lie at residues 1 to 73 and 137 to 166; these read MPSV…RKAM and KAPNLSHVTMKPESSTAAQEDEDEVDDTGV. Residues 20 to 29 are compositionally biased toward basic and acidic residues; sequence EQQELEHSDE. The segment covering 30-51 has biased composition (acidic residues); that stretch reads PILEDDEDDDDEEDDNDEDDAQ. Positions 56-66 are enriched in basic and acidic residues; sequence GEGKSKQSRSE. The NAC-A/B domain maps to 63–128; the sequence is SRSEKKCRKA…AKIEDLSSQL (66 aa). Residues 155–165 are compositionally biased toward acidic residues; the sequence is QEDEDEVDDTG. Positions 166 to 203 constitute a UBA domain; it reads VEPKDIELVMTQAGVSRTKAVKALKAADGDIVSAIMDL.

It belongs to the NAC-alpha family.

May promote appropriate targeting of ribosome-nascent polypeptide complexes. In Pinus taeda (Loblolly pine), this protein is Nascent polypeptide-associated complex subunit alpha-like protein.